The primary structure comprises 215 residues: Sodium channel regulatory subunit beta-2 (215 aa).

The signal sequence occupies residues 1–29 (MHRDAWLPRPAFSLTGLSLFFSLVPSGRS). Residues 30–157 (MEVTVPTTLS…LEVPPERDST (128 aa)) are Extracellular-facing. Positions 32–154 (VTVPTTLSVL…QVLLEVPPER (123 aa)) constitute an Ig-like C2-type domain. N-linked (GlcNAc...) asparagine glycans are attached at residues N42, N66, and N74. Intrachain disulfides connect C50-C127 and C72-C75. The chain crosses the membrane as a helical span at residues 158 to 179 (VAVIVGASVGGFLAVVILVLMV). Over 180 to 215 (VKCVRRKKEQKLSTDDLKTEEEGKTDGEGNAEDGAK) the chain is Cytoplasmic. Residues 187-215 (KEQKLSTDDLKTEEEGKTDGEGNAEDGAK) are disordered. Basic and acidic residues predominate over residues 189-215 (QKLSTDDLKTEEEGKTDGEGNAEDGAK). Residue S192 is modified to Phosphoserine. A Phosphothreonine modification is found at T204.

Belongs to the sodium channel auxiliary subunit SCN2B (TC 8.A.17) family. A voltage-gated sodium (Nav) channel consists of an ion-conducting pore-forming alpha subunit functional on its own that is regulated by one or more beta subunits. The beta subunit SCN2B is disulfide-linked to the pore-forming alpha subunit. Interacts with SCN1A; regulatory subunit of SCN1A/Nav1.1. Interacts with SCN2A; regulatory subunit of SCN2A/Nav1.2. Interacts with SCN3A; regulatory subunit of SCN3A/Nav1.3. Interacts with SCN5A; regulatory subunit of SCN5A/Nav1.5. Interacts with SCN8A; regulatory subunit of SCN8A/Nav1.6. Interacts with SCN9A; regulatory subunit of SCN9A/Nav1.7. Interacts with SCN10A; regulatory subunit of SCN10A/Nav1.8. Interacts with TNR; may play a crucial role in clustering and regulation of activity of SCN2B-containing Nav channels at nodes of Ranvier.

The protein localises to the cell membrane. It localises to the cell projection. Its subcellular location is the axon. Its function is as follows. Regulatory subunit of multiple voltage-gated sodium (Nav) channels directly mediating the depolarization of excitable membranes. Navs, also called VGSCs (voltage-gated sodium channels) or VDSCs (voltage-dependent sodium channels), operate by switching between closed and open conformations depending on the voltage difference across the membrane. In the open conformation they allow Na(+) ions to selectively pass through the pore, along their electrochemical gradient. The influx of Na+ ions provokes membrane depolarization, initiating the propagation of electrical signals throughout cells and tissues. The accessory beta subunits participate in localization and functional modulation of the Nav channels. Modulates the activity of SCN1A/Nav1.1, SCN2A/Nav1.2, SCN2A/Nav1.3, SCN5A/Nav1.5, SCN8A/Nav1.6, SCN9A/Nav1.7 and SCN10A/Nav1.8. The sequence is that of Sodium channel regulatory subunit beta-2 from Rattus norvegicus (Rat).